Here is a 520-residue protein sequence, read N- to C-terminus: Non-specific phospholipase C6 (520 aa).

Positions 1-31 are cleaved as a signal peptide; sequence MKPSSASRFSLTFSHFLTLYCLLTQTHVAQG.

This sequence belongs to the bacterial phospholipase C family. Expressed in roots, leaves, stems, flowers and siliques.

It localises to the secreted. This is Non-specific phospholipase C6 (NPC6) from Arabidopsis thaliana (Mouse-ear cress).